The chain runs to 117 residues: Large ribosomal subunit protein bL20 (117 aa).

It belongs to the bacterial ribosomal protein bL20 family.

Its function is as follows. Binds directly to 23S ribosomal RNA and is necessary for the in vitro assembly process of the 50S ribosomal subunit. It is not involved in the protein synthesizing functions of that subunit. The polypeptide is Large ribosomal subunit protein bL20 (Actinobacillus succinogenes (strain ATCC 55618 / DSM 22257 / CCUG 43843 / 130Z)).